A 340-amino-acid polypeptide reads, in one-letter code: Protein-arginine kinase (340 aa).

The 228-residue stretch at 14–241 (IVLSSRIRLA…YQIINQEKLA (228 aa)) folds into the Phosphagen kinase C-terminal domain. ATP is bound by residues 17 to 21 (SSRIR), Arg112, 163 to 167 (RASVM), and 194 to 199 (RGIYGE).

Belongs to the ATP:guanido phosphotransferase family.

The enzyme catalyses L-arginyl-[protein] + ATP = N(omega)-phospho-L-arginyl-[protein] + ADP + H(+). Its function is as follows. Catalyzes the specific phosphorylation of arginine residues in proteins. The protein is Protein-arginine kinase of Clostridium tetani (strain Massachusetts / E88).